Consider the following 280-residue polypeptide: Thymidylate synthase (280 aa).

R21 contributes to the dUMP binding site. (6R)-5,10-methylene-5,6,7,8-tetrahydrofolate is bound at residue H51. 142-143 (RR) provides a ligand contact to dUMP. C162 functions as the Nucleophile in the catalytic mechanism. DUMP-binding positions include 182 to 185 (RSAD), N193, and 223 to 225 (HLY). Residue D185 coordinates (6R)-5,10-methylene-5,6,7,8-tetrahydrofolate. Residue A279 coordinates (6R)-5,10-methylene-5,6,7,8-tetrahydrofolate.

The protein belongs to the thymidylate synthase family. Bacterial-type ThyA subfamily. As to quaternary structure, homodimer.

The protein resides in the cytoplasm. The catalysed reaction is dUMP + (6R)-5,10-methylene-5,6,7,8-tetrahydrofolate = 7,8-dihydrofolate + dTMP. It participates in pyrimidine metabolism; dTTP biosynthesis. Its function is as follows. Catalyzes the reductive methylation of 2'-deoxyuridine-5'-monophosphate (dUMP) to 2'-deoxythymidine-5'-monophosphate (dTMP) while utilizing 5,10-methylenetetrahydrofolate (mTHF) as the methyl donor and reductant in the reaction, yielding dihydrofolate (DHF) as a by-product. This enzymatic reaction provides an intracellular de novo source of dTMP, an essential precursor for DNA biosynthesis. The protein is Thymidylate synthase of Acinetobacter baumannii (strain AB307-0294).